The chain runs to 450 residues: Hyaluronidase-1 (450 aa).

The signal sequence occupies residues 1–35; the sequence is MRPFSLEVSLHLPWAMAAHLLPVCTLFLNLLSMTQ. 2 disulfide bridges follow: Cys58/Cys348 and Cys222/Cys236. The N-linked (GlcNAc...) asparagine glycan is linked to Asn85. Catalysis depends on Glu146, which acts as the Proton donor. N-linked (GlcNAc...) asparagine glycosylation is found at Asn231 and Asn365. Intrachain disulfides connect Cys373-Cys384, Cys378-Cys433, and Cys435-Cys444. N-linked (GlcNAc...) asparagine glycosylation is present at Asn398. Residues 433–444 enclose the EGF-like domain; sequence CRCYRGWRGTRC.

It belongs to the glycosyl hydrolase 56 family.

The protein resides in the secreted. It localises to the lysosome. It catalyses the reaction Random hydrolysis of (1-&gt;4)-linkages between N-acetyl-beta-D-glucosamine and D-glucuronate residues in hyaluronate.. May have a role in promoting tumor progression. May block the TGFB1-enhanced cell growth. The chain is Hyaluronidase-1 (HYAL1) from Bos taurus (Bovine).